The chain runs to 268 residues: Tryptophan synthase alpha chain (268 aa).

Residues Glu-49 and Asp-60 each act as proton acceptor in the active site.

This sequence belongs to the TrpA family. Tetramer of two alpha and two beta chains.

It catalyses the reaction (1S,2R)-1-C-(indol-3-yl)glycerol 3-phosphate + L-serine = D-glyceraldehyde 3-phosphate + L-tryptophan + H2O. It functions in the pathway amino-acid biosynthesis; L-tryptophan biosynthesis; L-tryptophan from chorismate: step 5/5. The alpha subunit is responsible for the aldol cleavage of indoleglycerol phosphate to indole and glyceraldehyde 3-phosphate. The sequence is that of Tryptophan synthase alpha chain from Xylella fastidiosa (strain 9a5c).